Here is a 154-residue protein sequence, read N- to C-terminus: Large ribosomal subunit protein uL13 (154 aa).

The protein belongs to the universal ribosomal protein uL13 family. As to quaternary structure, part of the 50S ribosomal subunit.

In terms of biological role, this protein is one of the early assembly proteins of the 50S ribosomal subunit, although it is not seen to bind rRNA by itself. It is important during the early stages of 50S assembly. The chain is Large ribosomal subunit protein uL13 from Rhizobium johnstonii (strain DSM 114642 / LMG 32736 / 3841) (Rhizobium leguminosarum bv. viciae).